The following is a 299-amino-acid chain: Regucalcin (299 aa).

Glu-18 lines the a divalent metal cation pocket. Substrate contacts are provided by Arg-101, Asn-103, and Glu-121. The a divalent metal cation site is built by Asn-154 and Asp-204. Residue Asp-204 is the Proton donor/acceptor of the active site.

The protein belongs to the SMP-30/CGR1 family. Zn(2+) serves as cofactor. Mn(2+) is required as a cofactor. Requires Ca(2+) as cofactor. The cofactor is Mg(2+).

The protein localises to the cytoplasm. The catalysed reaction is D-glucono-1,5-lactone + H2O = D-gluconate + H(+). It functions in the pathway cofactor biosynthesis; L-ascorbate biosynthesis via UDP-alpha-D-glucuronate pathway; L-ascorbate from UDP-alpha-D-glucuronate: step 3/4. Functionally, gluconolactonase with low activity towards other sugar lactones, including gulonolactone and galactonolactone. Catalyzes a key step in ascorbic acid (vitamin C) biosynthesis. Can also hydrolyze diisopropyl phosphorofluoridate and phenylacetate (in vitro). Calcium-binding protein. Modulates Ca(2+) signaling, and Ca(2+)-dependent cellular processes and enzyme activities. The sequence is that of Regucalcin from Gallus gallus (Chicken).